Reading from the N-terminus, the 436-residue chain is Aminotransferase tdiD (436 aa).

Substrate-binding residues include Arg30, Tyr86, Tyr148, and Asn202. An N6-(pyridoxal phosphate)lysine modification is found at Lys270. Arg407 lines the substrate pocket.

This sequence belongs to the class-I pyridoxal-phosphate-dependent aminotransferase family. Pyridoxal 5'-phosphate is required as a cofactor.

The enzyme catalyses 3-phenylpyruvate + L-tryptophan = indole-3-pyruvate + L-phenylalanine. The protein operates within secondary metabolite biosynthesis. In terms of biological role, aminotransferase; part of the gene cluster that mediates the biosynthesis of terrequinone A, an antitumor agent. The first step in the biosynthetic pathway for terrequinone A is formation of indole pyruvic acid (IPA) from L-tryptophan by the aminotransferase tdiD. The nonribosomal peptide synthase tdiA then immediately converts unstable IPA to didemethylasterriquinone D (DDAQ D), via condensation of 2 IPA molecules. The symmetric connectivity of the 2 IPA molecules is thought to arise by head-to-tail dual Claisen condensations facilitated by the TE domain. TdiB then catalyzes reverse prenylation by transferring dimethylallyl diphosphate to carbon atom 2' of DDAQ D, to yield asterriquinone C-1. Finally, tdiC and tdiE enzymes robustly convert asterriquinone C-1 to terrequinone A via a transformation involving regular prenylation at carbon atom 5, which requires elimination of the hydroxy group on C-5. This is Aminotransferase tdiD from Emericella nidulans (strain FGSC A4 / ATCC 38163 / CBS 112.46 / NRRL 194 / M139) (Aspergillus nidulans).